The chain runs to 356 residues: S-adenosylmethionine:tRNA ribosyltransferase-isomerase (356 aa).

The protein belongs to the QueA family. As to quaternary structure, monomer.

The protein localises to the cytoplasm. The enzyme catalyses 7-aminomethyl-7-carbaguanosine(34) in tRNA + S-adenosyl-L-methionine = epoxyqueuosine(34) in tRNA + adenine + L-methionine + 2 H(+). Its pathway is tRNA modification; tRNA-queuosine biosynthesis. Transfers and isomerizes the ribose moiety from AdoMet to the 7-aminomethyl group of 7-deazaguanine (preQ1-tRNA) to give epoxyqueuosine (oQ-tRNA). This chain is S-adenosylmethionine:tRNA ribosyltransferase-isomerase, found in Escherichia coli (strain ATCC 8739 / DSM 1576 / NBRC 3972 / NCIMB 8545 / WDCM 00012 / Crooks).